Consider the following 195-residue polypeptide: Penicillin-binding protein activator LpoB (195 aa).

Residues methionine 1–glycine 16 form the signal peptide. Cysteine 17 carries N-palmitoyl cysteine lipidation. A lipid anchor (S-diacylglycerol cysteine) is attached at cysteine 17. Residues serine 19 to proline 55 are disordered. Composition is skewed to pro residues over residues proline 24–proline 38 and proline 44–proline 55.

It belongs to the LpoB family. As to quaternary structure, interacts with PBP1b.

The protein localises to the cell outer membrane. In terms of biological role, regulator of peptidoglycan synthesis that is essential for the function of penicillin-binding protein 1B (PBP1b). The sequence is that of Penicillin-binding protein activator LpoB from Serratia proteamaculans (strain 568).